Here is a 355-residue protein sequence, read N- to C-terminus: Phosphoribosylformylglycinamidine cyclo-ligase (355 aa).

It belongs to the AIR synthase family.

It is found in the cytoplasm. The catalysed reaction is 2-formamido-N(1)-(5-O-phospho-beta-D-ribosyl)acetamidine + ATP = 5-amino-1-(5-phospho-beta-D-ribosyl)imidazole + ADP + phosphate + H(+). It participates in purine metabolism; IMP biosynthesis via de novo pathway; 5-amino-1-(5-phospho-D-ribosyl)imidazole from N(2)-formyl-N(1)-(5-phospho-D-ribosyl)glycinamide: step 2/2. The protein is Phosphoribosylformylglycinamidine cyclo-ligase of Methylobacterium sp. (strain 4-46).